The primary structure comprises 218 residues: Thiopurine S-methyltransferase (218 aa).

Residues tryptophan 10, leucine 45, glutamate 66, and arginine 123 each contribute to the S-adenosyl-L-methionine site.

This sequence belongs to the class I-like SAM-binding methyltransferase superfamily. TPMT family.

Its subcellular location is the cytoplasm. The catalysed reaction is S-adenosyl-L-methionine + a thiopurine = S-adenosyl-L-homocysteine + a thiopurine S-methylether.. The chain is Thiopurine S-methyltransferase from Shewanella putrefaciens (strain CN-32 / ATCC BAA-453).